Reading from the N-terminus, the 105-residue chain is MAEWNGEYVSPYAEHGKKSEQVKKITVSIPLKVLKILTDERTRRQVNNLRHATNSELLCEAFLHAFTGQPLPNDEDLRKERSDEIPEAAKILMRELGVDPDTWEY.

The protein belongs to the MetJ family. In terms of assembly, homodimer.

It is found in the cytoplasm. In terms of biological role, this regulatory protein, when combined with SAM (S-adenosylmethionine) represses the expression of the methionine regulon and of enzymes involved in SAM synthesis. In Yersinia enterocolitica serotype O:8 / biotype 1B (strain NCTC 13174 / 8081), this protein is Met repressor.